The sequence spans 403 residues: MSIMKIATLFFAALSAVEAAKLLTPSDKRDIVPDSYIVVMKDNVSPLKFDSHMSWATNVHHANLARQGSTATGGLKHVYRIDGWQGYSGSFARETIDRILENDDVDYVEPDRRVHLTALTTQPNAPSWGLGRISHRNNGNSNFVYDDRAGEGITFYGVDTGIDINHPDFGGRAVWGTNTAGGSDSDGHGHGTHTAGTVAGASYGIAKKAKLVAVKVLSEGGTGQWSGIIEGINWSVNHARANNALGKAVMNMSLGGRLSTSVNQATTRAQRAGIFIAVAAGNEDPSVQSDAANTSPASAEDVCTVAASTEQDGRASFSNWGSMVEIYAPGTNIVSTTPGGNTGKMSGTSMAAPHVAGVGAAIMASEGISPSEVCSRLVEIGLEQISNPGSGTTNKLLYNNSGR.

A signal peptide spans 1–19; sequence MSIMKIATLFFAALSAVEA. The propeptide occupies 20-117; that stretch reads AKLLTPSDKR…VEPDRRVHLT (98 aa). The 82-residue stretch at 35 to 116 folds into the Inhibitor I9 domain; it reads SYIVVMKDNV…YVEPDRRVHL (82 aa). Residues 127-403 enclose the Peptidase S8 domain; that stretch reads SWGLGRISHR…NKLLYNNSGR (277 aa). Residues aspartate 159 and histidine 190 each act as charge relay system in the active site. Residues asparagine 233 and asparagine 251 are each glycosylated (N-linked (GlcNAc...) asparagine). The active-site Charge relay system is serine 349. N-linked (GlcNAc...) asparagine glycosylation occurs at asparagine 399.

It belongs to the peptidase S8 family.

It is found in the secreted. Functionally, secreted subtilisin-like serine protease with keratinolytic activity that contributes to pathogenicity. The sequence is that of Subtilisin-like protease CPC735_035780 from Coccidioides posadasii (strain C735) (Valley fever fungus).